A 367-amino-acid chain; its full sequence is MTSTQRTLMVMAGGTGGHVFPGLAVAHRMQAQGWRVVWLGNPAGMEATLVPRHGIPMEYVRFGGLRGKGLATKFALPFNLLRACAQSLRALRRVKPDVVLGMGGYITFPAGLVTVLTGRPLVLHEQNSIAGLTNKVLAKLAKRVLVAFPGALPNAEWTGNPIRTELARTEPPQARYAARSGKLRLLVVGGSLGAAALNEVVPRALALLAPDERPQVVHQAGAKHIDTLKENYEAAGLSCGSDVALVPFIDDMASAYANADLVICRSGAMTVAEIAAVGVAALFVPFPHAVDDHQTTNAEFLAEQGAAVLVQQRDLSAELLADWLRGQSRDSLAAMAERSRSLAKPDATDEVARVCAAVAGANLEGKQ.

UDP-N-acetyl-alpha-D-glucosamine-binding positions include 15 to 17 (TGG), Asn127, Arg163, Ser191, Ile249, and Gln294.

Belongs to the glycosyltransferase 28 family. MurG subfamily.

It is found in the cell inner membrane. The catalysed reaction is di-trans,octa-cis-undecaprenyl diphospho-N-acetyl-alpha-D-muramoyl-L-alanyl-D-glutamyl-meso-2,6-diaminopimeloyl-D-alanyl-D-alanine + UDP-N-acetyl-alpha-D-glucosamine = di-trans,octa-cis-undecaprenyl diphospho-[N-acetyl-alpha-D-glucosaminyl-(1-&gt;4)]-N-acetyl-alpha-D-muramoyl-L-alanyl-D-glutamyl-meso-2,6-diaminopimeloyl-D-alanyl-D-alanine + UDP + H(+). The protein operates within cell wall biogenesis; peptidoglycan biosynthesis. Cell wall formation. Catalyzes the transfer of a GlcNAc subunit on undecaprenyl-pyrophosphoryl-MurNAc-pentapeptide (lipid intermediate I) to form undecaprenyl-pyrophosphoryl-MurNAc-(pentapeptide)GlcNAc (lipid intermediate II). In Burkholderia mallei (strain NCTC 10247), this protein is UDP-N-acetylglucosamine--N-acetylmuramyl-(pentapeptide) pyrophosphoryl-undecaprenol N-acetylglucosamine transferase.